A 588-amino-acid chain; its full sequence is DNA ligase (588 aa).

Residue Glu-250 coordinates ATP. The active-site N6-AMP-lysine intermediate is Lys-252. ATP is bound by residues Arg-257, Arg-272, Glu-302, Phe-342, Arg-417, and Lys-423.

The protein belongs to the ATP-dependent DNA ligase family. Mg(2+) is required as a cofactor.

The catalysed reaction is ATP + (deoxyribonucleotide)n-3'-hydroxyl + 5'-phospho-(deoxyribonucleotide)m = (deoxyribonucleotide)n+m + AMP + diphosphate.. DNA ligase that seals nicks in double-stranded DNA during DNA replication, DNA recombination and DNA repair. This is DNA ligase from Nitrosopumilus maritimus (strain SCM1).